Consider the following 613-residue polypeptide: DBH-like monooxygenase protein 1 (613 aa).

The signal sequence occupies residues 1–19 (MCGWPLLVLWALLPATAAG). At 20-587 (SPGRSYPHRV…PLVCEKAASP (568 aa)) the chain is on the lumenal side. The region spanning 35–148 (GKYWLHWGRQ…STVRVIWAYH (114 aa)) is the DOMON domain. Residue Asn114 is glycosylated (N-linked (GlcNAc...) asparagine). Tyr203 is an active-site residue. 2 disulfides stabilise this stretch: Cys205/Cys257 and Cys242/Cys269. The Cu cation site is built by His235 and His236. Asn247 carries an N-linked (GlcNAc...) asparagine glycan. Cu cation is bound by residues His307, His389, His391, and Met464. 3 disulfide bridges follow: Cys364-Cys480, Cys368-Cys550, and Cys443-Cys465. His389 is a catalytic residue. N-linked (GlcNAc...) asparagine glycosylation is found at Asn476 and Asn517. The chain crosses the membrane as a helical span at residues 588–608 (PLHGIFSLRLLTCALLLGSML).

This sequence belongs to the copper type II ascorbate-dependent monooxygenase family. Cu(2+) is required as a cofactor. N-glycosylated. As to expression, broadly exprressed, with highest levels in salivary gland and ovary.

Its subcellular location is the endoplasmic reticulum membrane. In Mus musculus (Mouse), this protein is DBH-like monooxygenase protein 1 (Moxd1).